Reading from the N-terminus, the 289-residue chain is Pantothenate synthetase (289 aa).

ATP is bound at residue 30–37 (MGNLHEGH). The active-site Proton donor is H37. Q61 lines the (R)-pantoate pocket. Residue Q61 participates in beta-alanine binding. 149–152 (GEKD) lines the ATP pocket. Q155 serves as a coordination point for (R)-pantoate. Position 186 to 189 (186 to 189 (MSSR)) interacts with ATP.

It belongs to the pantothenate synthetase family. As to quaternary structure, homodimer.

It localises to the cytoplasm. It carries out the reaction (R)-pantoate + beta-alanine + ATP = (R)-pantothenate + AMP + diphosphate + H(+). It functions in the pathway cofactor biosynthesis; (R)-pantothenate biosynthesis; (R)-pantothenate from (R)-pantoate and beta-alanine: step 1/1. Its function is as follows. Catalyzes the condensation of pantoate with beta-alanine in an ATP-dependent reaction via a pantoyl-adenylate intermediate. The chain is Pantothenate synthetase from Psychromonas ingrahamii (strain DSM 17664 / CCUG 51855 / 37).